Reading from the N-terminus, the 200-residue chain is Phosphoheptose isomerase (200 aa).

One can recognise an SIS domain in the interval 37 to 199; sequence VLGCITAGGK…DVQLLGEQDL (163 aa). 52–54 provides a ligand contact to substrate; that stretch reads NGG. Residues His-61 and Glu-65 each coordinate Zn(2+). Residues Glu-65, 94–95, 120–122, Ser-125, and Gln-175 each bind substrate; these read ND and TTS. 2 residues coordinate Zn(2+): Gln-175 and His-183.

The protein belongs to the SIS family. GmhA subfamily. Homotetramer. Requires Zn(2+) as cofactor.

Its subcellular location is the cytoplasm. The enzyme catalyses 2 D-sedoheptulose 7-phosphate = D-glycero-alpha-D-manno-heptose 7-phosphate + D-glycero-beta-D-manno-heptose 7-phosphate. It functions in the pathway carbohydrate biosynthesis; D-glycero-D-manno-heptose 7-phosphate biosynthesis; D-glycero-alpha-D-manno-heptose 7-phosphate and D-glycero-beta-D-manno-heptose 7-phosphate from sedoheptulose 7-phosphate: step 1/1. Its function is as follows. Catalyzes the isomerization of sedoheptulose 7-phosphate in D-glycero-D-manno-heptose 7-phosphate. The protein is Phosphoheptose isomerase of Methylibium petroleiphilum (strain ATCC BAA-1232 / LMG 22953 / PM1).